A 4383-amino-acid chain; its full sequence is MSKINKYGLELHWAPEFPWMFEDAEEKLDNPSSSEVDMICSTTAQKLETDGICPENHVMVDCRRLLKQECCVQSSLIREIVMNASPYHLEVLLQDALQSREAVLVTTPLGMSLEACYVRGCNPKGWTMGLFRRRSVCNTGRCTVNKHVAYQLYMIDPAGVCLGAGQFVGWVIPLAFMPVQSRKFIVPWVMYLRKRGEKGAYNKDHGCGGFGHVYDFKVEDAYDQVHDEPKGKFSKKAYALIRGYRGVKPLLYVDQYGCDYTGSLADGLEAYADKTLQEMKALFPTWSQELPFDVIVAWHVVRDPRYVMRLQSAATICSVAYVANPTEDLCDGSVVIKEPVHVYADDSIILRQYNLFDIMSHFYMEADTVVNAFYGVALKDCGFVMQFGYIDCEQDSCDFKGWIPGNMIDGFACTTCGHVYEVGDLIAQSSGVLPVNPVLHTKSAAGYGGFGCKDSFTLYGQTVVYFGGCVYWSPARNIWIPILKSSVKSYDSLVYTGVLGCKAIVKETNLICKALYLDYVQHKCGNLHQRELLGVSDVWHKQLLINRGVYKPLLENIDYFNMRRAKFSLETFTVCADGFMPFLLDDLVPRAYYLAVSGQAFCDYADKLCHAVVSKSKELLDVSLDSLGAAIHYLNSKIVDLAQHFSDFGTSFVSKIVHFFKTFTTSTALAFAWVLFHVLHGAYIVVESDIYFVKNIPRYASAVAQAFQSVAKVVLDSLRVTFIDGLSCFKIGRRRICLSGRKIYEVERGLLHSSQLPLDVYDLTMPSQVQKAKQKPIYLKGSGSDFSLADSVVEVVTTSLTPCGYSEPPKVADKICIVDNVYMAKAGDKYYPVVVDDHVGLLDQAWRVPCAGRRVTFKEQPTVKEIISMPKIIKVFYELDNDFNTILNTACGVFEVDDTVDMEEFYAVVIDAIEEKLSPCKELEGVGAKVSAFLQKLEDNPLFLFDEAGEEVFAPKLYCAFTAPEDDDFLEESDVEEDDVEGEETDLTITSAGQPCVASEQEESSEVLEDTLDDGPSVETSDSQVEEDVEMSDFVDLESVIQDYENVCFEFYTTEPEFVKVLGLYVPKATRNNCWLRSVLAVMQKLPCQFKDKNLQDLWVLYKQQYSQLFVDTLVNKIPANIVLPQGGYVADFAYWFLTLCDWQCVAYWKCIKCDLALKLKGLDAMFFYGDVVSHICKCGESMVLIDVDVPFTAHFALKDKLFCAFITKRIVYKAACVVDVNDSHSMAVVDGKQIDDHRITSITSDKFDFIIGHGMSFSMTTFEIAQLYGSCITPNVCFVKGDIIKVSKLVKAEVVVNPANGHMVHGGGVAKAIAVAAGQQFVKETTNMVKSKGVCATGDCYVSTGGKLCKTVLNVVGPDARTQGKQSYVLLERVYKHFNNYDCVVTTLISAGIFSVPSDVSLTYLLGTAKKQVVLVSNNQEDFDLISKCQITAVEGTKKLAARLSFNVGRSIVYETDANKLILINDVAFVSTFNVLQDVLSLRHDIALDDDARTFVQSNVDVLPEGWRVVNKFYQINGVRTVKYFECTGGIDICSQDKVFGYVQQGIFNKATVAQIKALFLDKVDILLTVDGVNFTNRFVPVGESFGKSLGNVFCDGVNVTKHKCDINYKGKVFFQFDNLSSEDLKAVRSSFNFDQKELLAYYNMLVNCFKWQVVVNGKYFTFKQANNNCFVNVSCLMLQSLHLTFKIVQWQEAWLEFRSGRPARFVALVLAKGGFKFGDPADSRDFLRVVFSQVDLTGAICDFEIACKCGVKQEQRTGLDAVMHFGTLSREDLEIGYTVDCSCGKKLIHCVRFDVPFLICSNTPASVKLPKGVGSANIFIGDNVGHYVHVKCEQSYQLYDASNVKKVTDVTGKLSDCLYLKNLKQTFKSVLTTYYLDDVKKIEYKPDLSQYYCDGGKYYTQRIIKAQFKTFEKVDGVYTNFKLIGHTVCDSLNSKLGFDSSKEFVEYKITEWPTATGDVVLANDDLYVKRYERGCITFGKPVIWLSHEKASLNSLTYFNRPLLVDDNKFDVLKVDDVDDSGDSSESGAKETKEINIIKLSGVKKPFKVEDSVIVNDDTSETKYVKSLSIVDVYDMWLTGCKYVVRTANALSRAVNVPTIRKFIKFGMTLVSIPIDLLNLREIKPAVNVVKAVRNKTSACFNFIKWLFVLLFGWIKISADNKVIYTTEIASKLTCKLVALAFKNAFLTFKWSMVARGACIIATIFLLWFNFIYANVIFSDFYLPKIGFLPTFVGKIAQWIKNTFSLVTICDLYSIQDVGFKNQYCNGSIACQFCLAGFDMLDNYKAIDVVQYEADRRAFVDYTGVLKIVIELIVSYALYTAWFYPLFALISIQILTTWLPELFMLSTLHWSFRLLVALANMLPAHVFMRFYIIIASFIKLFSLFKHVAYGCSKSGCLFCYKRNRSLRVKCSTIVGGMIRYYDVMANGGTGFCSKHQWNCIDCDSYKPGNTFITVEAALDLSKELKRPIQPTDVAYHTVTDVKQVGCSMRLFYDRDGQRIYDDVNASLFVDYSNLLHSKVKSVPNMHVVVVENDADKANFLNAAVFYAQSLFRPILMVDKNLITTANTGTSVTETMFDVYVDTFLSMFDVDKKSLNALIATAHSSIKQGTQIYKVLDTFLSCARKSCSIDSDVDTKCLADSVMSAVSAGLELTDESCNNLVPTYLKSDNIVAADLGVLIQNSAKHVQGNVAKIAGVSCIWSVDAFNQFSSDFQHKLKKACCKTGLKLKLTYNKQMANVSVLTTPFSLKGGAVFSYFVYVCFVLSLVCFIGLWCLMPTYTVHKSDFQLPVYASYKVLDNGVIRDVSVEDVCFANKFEQFDQWYESTFGLSYYSNSMACPIVVAVIDQDFGSTVFNVPTKVLRYGYHVLHFITHALSADGVQCYTPHSQISYSNFYASGCVLSSACTMFTMADGSPQPYCYTDGLMQNASLYSSLVPHVRYNLANAKGFIRFPEVLREGLVRVVRTRSMSYCRVGLCEEADEGICFNFNGSWVLNNDYYRSLPGTFCGRDVFDLIYQLFKGLAQPVDFLALTASSIAGAILAVIVVLVFYYLIKLKRAFGDYTSVVFVNVIVWCVNFMMLFVFQVYPTLSCVYAICYFYATLYFPSEISVIMHLQWLVMYGTIMPLWFCLLYIAVVVSNHAFWVFSYCRKLGTSVRSDGTFEEMALTTFMITKDSYCKLKNSLSDVAFNRYLSLYNKYRYYSGKMDTAAYREAACSQLAKAMDTFTNNNGSDVLYQPPTASVSTSFLQSGIVKMVNPTSKVEPCVVSVTYGNMTLNGLWLDDKVYCPRHVICSASDMTNPDYTNLLCRVTSSDFTVLFDRLSLTVMSYQMRGCMLVLTVTLQNSRTPKYTFGVVKPGETFTVLAAYNGKPQGAFHVTMRSSYTIKGSFLCGSCGSVGYVIMGDCVKFVYMHQLELSTGCHTGTDFNGDFYGPYKDAQVVQLPIQDYIQSVNFLAWLYAAILNNCNWFIQSDKCSVEDFNVWALSNGFSQVKSDLVIDALASMTGVSLETLLAAIKRLKNGFQGRQIMGSCSFEDELTPSDVYQQLAGIKLQSKRTRLFKGTVCWIMASTFLFSCIITAFVKWTMFMYVTTNMFSITFCALCVISLAMLLVKHKHLYLTMYITPVLFTLLYNNYLVVYKHTFRGYVYAWLSYYVPSVEYTYTDEVIYGMLLLVGMVFVTLRSINHDLFSFIMFVGRLISVFSLWYKGSNLEEEILLMLASLFGTYTWTTVLSMAVAKVIAKWVAVNVLYFTDIPQIKIVLLCYLFIGYIISCYWGLFSLMNSLFRMPLGVYNYKISVQELRYMNANGLRPPKNSFEALMLNFKLLGIGGVPIIEVSQFQSKLTDVKCANVVLLNCLQHLHVASNSKLWHYCSTLHNEILATSDLSVAFEKLAQLLIVLFANPAAVDSKCLTSIEEVCDDYAKDNTVLQALQSEFVNMASFVEYEVAKKNLDEARFSGSANQQQLKQLEKACNIAKSAYERDRAVAKKLERMADLALTNMYKEARINDKKSKVVSALQTMLFSMVRKLDNQALNSILDNAVKGCVPLNAIPSLAANTLNIIVPDKSVYDQIVDNIYVTYAGNVWQIQTIQDSDGTNKQLNEISDDCNWPLVIIANRYNEVSATVLQNNELMPAKLKIQVVNSGPDQTCNTPTQCYYNNSNNGKIVYAILSDVDGLKYTKILKDDGNFVVLELDPPCKFTVQDAKGLKIKYLYFVKGCNTLARGWVVGTISSTVRLQAGTATEYASNSSILSLCAFSVDPKKTYLDFIQQGGTPIANCVKMLCDHAGTGMAITVKPDATTSQDSYGGASVCIYCRARVEHPDVDGLCKLRGKFVQVPVGIKDPVSYVLTHDVCRVCGFWRDGSCSCVSTDTTVQSKDTNFLNGFGVRV.

The 143-residue stretch at 54–196 (PENHVMVDCR…PWVMYLRKRG (143 aa)) folds into the CoV Nsp1 globular domain. The BetaCoV Nsp1 C-terminal domain occupies 216–246 (FKVEDAYDQVHDEPKGKFSKKAYALIRGYRG). One can recognise a CoV Nsp2 N-terminal domain in the interval 250-514 (LLYVDQYGCD…VKETNLICKA (265 aa)). Cys-392, Cys-397, Cys-413, and Cys-416 together coordinate Zn(2+). The interval 392–416 (CEQDSCDFKGWIPGNMIDGFACTTC) is C4. A CoV Nsp2 middle domain is found at 524 to 713 (CGNLHQRELL…AQAFQSVAKV (190 aa)). The region spanning 733 to 851 (RRRICLSGRK…LDQAWRVPCA (119 aa)) is the CoV Nsp2 C-terminal domain. One can recognise a Ubiquitin-like 1 domain in the interval 853–966 (RRVTFKEQPT…LYCAFTAPED (114 aa)). A disordered region spans residues 995 to 1025 (PCVASEQEESSEVLEDTLDDGPSVETSDSQV). The segment covering 1000–1013 (EQEESSEVLEDTLD) has biased composition (acidic residues). Residues 1036–1274 (DLESVIQDYE…IAQLYGSCIT (239 aa)) form the Peptidase C16 1 domain. Cys-1074 acts as the For PL1-PRO activity in catalysis. Zn(2+) contacts are provided by Cys-1151, Cys-1154, Cys-1177, and Cys-1179. Residues 1151 to 1179 (CIKCDLALKLKGLDAMFFYGDVVSHICKC) form a C4-type 1 zinc finger. Residues His-1225 and Asp-1236 each act as for PL1-PRO activity in the active site. Positions 1275-1435 (PNVCFVKGDI…LISKCQITAV (161 aa)) constitute a Macro domain. A DPUP domain is found at 1491–1563 (DDARTFVQSN…VAQIKALFLD (73 aa)). Residues 1562-1617 (LDKVDILLTVDGVNFTNRFVPVGESFGKSLGNVFCDGVNVTKHKCDINYKGKVFFQ) form the Ubiquitin-like 2 domain. Positions 1631–1892 (SSFNFDQKEL…KIEYKPDLSQ (262 aa)) constitute a Peptidase C16 2 domain. Residue Cys-1671 is the For PL2-PRO activity of the active site. 4 residues coordinate Zn(2+): Cys-1749, Cys-1751, Cys-1783, and Cys-1785. The segment at 1749–1785 (CKCGVKQEQRTGLDAVMHFGTLSREDLEIGYTVDCSC) adopts a C4-type 2 zinc-finger fold. Catalysis depends on for PL2-PRO activity residues His-1828 and Asp-1842. In terms of domain architecture, Nucleic acid-binding spans 1906–2007 (IKAQFKTFEK…TYFNRPLLVD (102 aa)). Residues 2020–2169 (DDSGDSSESG…ADNKVIYTTE (150 aa)) enclose the G2M domain. 3 helical membrane-spanning segments follow: residues 2138–2158 (TSACFNFIKWLFVLLFGWIKI), 2199–2219 (ACIIATIFLLWFNFIYANVIF), and 2221–2241 (DFYLPKIGFLPTFVGKIAQWI). The HD1 stretch occupies residues 2138-2385 (TSACFNFIKW…ASFIKLFSLF (248 aa)). The 62-residue stretch at 2235-2296 (GKIAQWIKNT…AIDVVQYEAD (62 aa)) folds into the 3Ecto domain. Disulfide bonds link Cys-2251/Cys-2275 and Cys-2266/Cys-2272. The next 3 membrane-spanning stretches (helical) occupy residues 2313 to 2333 (LIVSYALYTAWFYPLFALISI), 2343 to 2363 (LFMLSTLHWSFRLLVALANML), and 2365 to 2385 (AHVFMRFYIIIASFIKLFSLF). Residues 2383-2473 (SLFKHVAYGC…ELKRPIQPTD (91 aa)) form a Y1 region. Residues 2383-2750 (SLFKHVAYGC…LTTPFSLKGG (368 aa)) enclose the CoV Nsp3 Y domain. Zn(2+) is bound by residues His-2387, Cys-2392, Cys-2397, Cys-2400, Cys-2433, His-2436, Cys-2440, and Cys-2443. The segment at 2387 to 2400 (HVAYGCSKSGCLFC) is ZF1. The interval 2433-2443 (CSKHQWNCIDC) is ZF2. A Y2 region spans residues 2474–2566 (VAYHTVTDVK…MVDKNLITTA (93 aa)). Residues 2474–2750 (VAYHTVTDVK…LTTPFSLKGG (277 aa)) form a coV-Y region. Residues 2567 to 2649 (NTGTSVTETM…DSVMSAVSAG (83 aa)) are Y3. Residues 2650-2750 (LELTDESCNN…LTTPFSLKGG (101 aa)) are Y4. 7 helical membrane passes run 2752-2772 (VFSYFVYVCFVLSLVCFIGLW), 2824-2844 (STFGLSYYSNSMACPIVVAVI), 3009-3029 (VFDLIYQLFKGLAQPVDFLAL), 3031-3051 (ASSIAGAILAVIVVLVFYYLI), 3063-3083 (VVFVNVIVWCVNFMMLFVFQV), 3090-3110 (VYAICYFYATLYFPSEISVIM), and 3115-3135 (LVMYGTIMPLWFCLLYIAVVV). Residues 2752-3135 (VFSYFVYVCF…FCLLYIAVVV (384 aa)) are HD2. Residues 3149 to 3246 (LGTSVRSDGT…TASVSTSFLQ (98 aa)) enclose the Nsp4C domain. The Peptidase C30 domain maps to 3247-3549 (SGIVKMVNPT…YQQLAGIKLQ (303 aa)). Active-site for 3CL-PRO activity residues include His-3287 and Cys-3391. Positions 3319–3775 (LSLTVMSYQM…IISCYWGLFS (457 aa)) are HD3. 7 helical membrane passes run 3558 to 3578 (GTVCWIMASTFLFSCIITAFV), 3588 to 3608 (TNMFSITFCALCVISLAMLLV), 3615 to 3635 (LTMYITPVLFTLLYNNYLVVY), 3657 to 3677 (TYTDEVIYGMLLLVGMVFVTL), 3684 to 3704 (LFSFIMFVGRLISVFSLWYKG), 3711 to 3731 (ILLMLASLFGTYTWTTVLSMA), and 3755 to 3775 (IVLLCYLFIGYIISCYWGLFS). In terms of domain architecture, RdRp Nsp7 cofactor spans 3837–3925 (SKLTDVKCAN…DYAKDNTVLQ (89 aa)). The RdRp Nsp8 cofactor domain occupies 3926 to 4122 (ALQSEFVNMA…YNEVSATVLQ (197 aa)). One can recognise a Nsp9 ssRNA-binding domain in the interval 4123–4232 (NNELMPAKLK…GTISSTVRLQ (110 aa)). An ExoN/MTase coactivator domain is found at 4233-4370 (AGTATEYASN…CVSTDTTVQS (138 aa)). The Zn(2+) site is built by Cys-4306, Cys-4309, His-4315, Cys-4322, Cys-4348, Cys-4351, Cys-4359, and Cys-4361. 2 zinc fingers span residues 4306 to 4322 (CIYCRARVEHPDVDGLC) and 4348 to 4361 (CRVCGFWRDGSCSC).

It belongs to the coronaviruses polyprotein 1ab family. In terms of assembly, 3CL-PRO exists as monomer and homodimer. Eight copies of nsp7 and eight copies of nsp8 assemble to form a heterohexadecamer. Nsp9 is a dimer. Nsp10 forms a dodecamer. Post-translationally, specific enzymatic cleavages in vivo by its own proteases yield mature proteins. 3CL-PRO and PL-PRO proteinases are autocatalytically processed.

The protein localises to the host membrane. It is found in the host cytoplasm. Its subcellular location is the host perinuclear region. The enzyme catalyses Thiol-dependent hydrolysis of ester, thioester, amide, peptide and isopeptide bonds formed by the C-terminal Gly of ubiquitin (a 76-residue protein attached to proteins as an intracellular targeting signal).. The catalysed reaction is TSAVLQ-|-SGFRK-NH2 and SGVTFQ-|-GKFKK the two peptides corresponding to the two self-cleavage sites of the SARS 3C-like proteinase are the two most reactive peptide substrates. The enzyme exhibits a strong preference for substrates containing Gln at P1 position and Leu at P2 position.. It catalyses the reaction a 5'-end diphospho-ribonucleoside in mRNA + GTP + H(+) = a 5'-end (5'-triphosphoguanosine)-ribonucleoside in mRNA + diphosphate. Its function is as follows. The papain-like proteinase 1 (PL1-PRO) and papain-like proteinase 2 (PL2-PRO) are responsible for the cleavages located at the N-terminus of the replicase polyprotein. In addition, PLP2 possesses a deubiquitinating/deISGylating activity and processes both 'Lys-48'- and 'Lys-63'-linked polyubiquitin chains from cellular substrates. Antagonizes innate immune induction of type I interferon by blocking the phosphorylation, dimerization and subsequent nuclear translocation of host IRF-3. In terms of biological role, responsible for the majority of cleavages as it cleaves the C-terminus of replicase polyprotein at 11 sites. Recognizes substrates containing the core sequence [ILMVF]-Q-|-[SGACN]. Inhibited by the substrate-analog Cbz-Val-Asn-Ser-Thr-Leu-Gln-CMK. Also contains an ADP-ribose-1''-phosphate (ADRP)-binding function. Functionally, nsp7-nsp8 hexadecamer may possibly confer processivity to the polymerase, maybe by binding to dsRNA or by producing primers utilized by the latter. Catalytic subunit of viral RNA capping enzyme which catalyzes the RNA guanylyltransferase reaction for genomic and sub-genomic RNAs. The kinase-like NiRAN domain of NSP12 transfers RNA to the amino terminus of NSP9, forming a covalent RNA-protein intermediate. Subsequently, the NiRAN domain transfers RNA to GDP, forming the core cap structure GpppA-RNA. The NSP14 and NSP16 methyltransferases then add methyl groups to form functional cap structures. Its function is as follows. Binds to the 40S ribosomal subunit and inhibits host translation. The nsp1-40S ribosome complex further induces an endonucleolytic cleavage near the 5'UTR of host mRNAs, targeting them for degradation. This inhibits the integrated stress response (ISR) in the infected cell by preventing EIF2S1/eIF2-alpha phosphorylation upstream of stress granule formation and depletes host G3BP1. By suppressing host gene expression, nsp1 facilitates efficient viral gene expression in infected cells and evasion from host immune response. The protein is Replicase polyprotein 1a of Human coronavirus OC43 (HCoV-OC43).